Consider the following 158-residue polypeptide: 6,7-dimethyl-8-ribityllumazine synthase (158 aa).

5-amino-6-(D-ribitylamino)uracil-binding positions include Trp-27, 58-60, and 81-83; these read SFE and VII. (2S)-2-hydroxy-3-oxobutyl phosphate is bound at residue 86–87; the sequence is GT. The active-site Proton donor is the His-89. Phe-114 is a binding site for 5-amino-6-(D-ribitylamino)uracil. Arg-128 contributes to the (2S)-2-hydroxy-3-oxobutyl phosphate binding site.

It belongs to the DMRL synthase family.

It carries out the reaction (2S)-2-hydroxy-3-oxobutyl phosphate + 5-amino-6-(D-ribitylamino)uracil = 6,7-dimethyl-8-(1-D-ribityl)lumazine + phosphate + 2 H2O + H(+). Its pathway is cofactor biosynthesis; riboflavin biosynthesis; riboflavin from 2-hydroxy-3-oxobutyl phosphate and 5-amino-6-(D-ribitylamino)uracil: step 1/2. Its function is as follows. Catalyzes the formation of 6,7-dimethyl-8-ribityllumazine by condensation of 5-amino-6-(D-ribitylamino)uracil with 3,4-dihydroxy-2-butanone 4-phosphate. This is the penultimate step in the biosynthesis of riboflavin. The sequence is that of 6,7-dimethyl-8-ribityllumazine synthase from Leifsonia xyli subsp. xyli (strain CTCB07).